The sequence spans 485 residues: Aspartyl/glutamyl-tRNA(Asn/Gln) amidotransferase subunit B (485 aa).

Belongs to the GatB/GatE family. GatB subfamily. As to quaternary structure, heterotrimer of A, B and C subunits.

The enzyme catalyses L-glutamyl-tRNA(Gln) + L-glutamine + ATP + H2O = L-glutaminyl-tRNA(Gln) + L-glutamate + ADP + phosphate + H(+). The catalysed reaction is L-aspartyl-tRNA(Asn) + L-glutamine + ATP + H2O = L-asparaginyl-tRNA(Asn) + L-glutamate + ADP + phosphate + 2 H(+). In terms of biological role, allows the formation of correctly charged Asn-tRNA(Asn) or Gln-tRNA(Gln) through the transamidation of misacylated Asp-tRNA(Asn) or Glu-tRNA(Gln) in organisms which lack either or both of asparaginyl-tRNA or glutaminyl-tRNA synthetases. The reaction takes place in the presence of glutamine and ATP through an activated phospho-Asp-tRNA(Asn) or phospho-Glu-tRNA(Gln). The polypeptide is Aspartyl/glutamyl-tRNA(Asn/Gln) amidotransferase subunit B (Borrelia recurrentis (strain A1)).